Reading from the N-terminus, the 428-residue chain is Enolase (428 aa).

A (2R)-2-phosphoglycerate-binding site is contributed by Gln163. The active-site Proton donor is the Glu205. Mg(2+)-binding residues include Asp242, Glu285, and Asp312. (2R)-2-phosphoglycerate-binding residues include Lys337, Arg366, Ser367, and Lys388. The active-site Proton acceptor is the Lys337.

Belongs to the enolase family. Requires Mg(2+) as cofactor.

The protein resides in the cytoplasm. It is found in the secreted. Its subcellular location is the cell surface. The enzyme catalyses (2R)-2-phosphoglycerate = phosphoenolpyruvate + H2O. The protein operates within carbohydrate degradation; glycolysis; pyruvate from D-glyceraldehyde 3-phosphate: step 4/5. In terms of biological role, catalyzes the reversible conversion of 2-phosphoglycerate (2-PG) into phosphoenolpyruvate (PEP). It is essential for the degradation of carbohydrates via glycolysis. The polypeptide is Enolase (Nitrosomonas europaea (strain ATCC 19718 / CIP 103999 / KCTC 2705 / NBRC 14298)).